The following is a 206-amino-acid chain: Small ribosomal subunit protein uS4 (206 aa).

Positions 98–164 constitute an S4 RNA-binding domain; it reads MRLDNVVYRL…EKFKTFIENP (67 aa).

The protein belongs to the universal ribosomal protein uS4 family. As to quaternary structure, part of the 30S ribosomal subunit. Contacts protein S5. The interaction surface between S4 and S5 is involved in control of translational fidelity.

Functionally, one of the primary rRNA binding proteins, it binds directly to 16S rRNA where it nucleates assembly of the body of the 30S subunit. Its function is as follows. With S5 and S12 plays an important role in translational accuracy. The chain is Small ribosomal subunit protein uS4 from Clostridium tetani (strain Massachusetts / E88).